A 33-amino-acid chain; its full sequence is Brevinin-2Rk (33 aa).

A disulfide bond links C27 and C33.

In terms of tissue distribution, expressed by the skin glands.

The protein localises to the secreted. In terms of biological role, antimicrobial peptide. The polypeptide is Brevinin-2Rk (Pelophylax ridibundus (Marsh frog)).